The primary structure comprises 202 residues: Potassium-transporting ATPase KdpC subunit 1 (202 aa).

Residues 17-37 (LWVIAAVIYPFFMIAVGQIVF) form a helical membrane-spanning segment.

Belongs to the KdpC family. The system is composed of three essential subunits: KdpA, KdpB and KdpC.

It localises to the cell inner membrane. Part of the high-affinity ATP-driven potassium transport (or Kdp) system, which catalyzes the hydrolysis of ATP coupled with the electrogenic transport of potassium into the cytoplasm. This subunit acts as a catalytic chaperone that increases the ATP-binding affinity of the ATP-hydrolyzing subunit KdpB by the formation of a transient KdpB/KdpC/ATP ternary complex. This is Potassium-transporting ATPase KdpC subunit 1 from Nostoc sp. (strain PCC 7120 / SAG 25.82 / UTEX 2576).